A 313-amino-acid chain; its full sequence is Ribosomal RNA small subunit methyltransferase H (313 aa).

S-adenosyl-L-methionine-binding positions include 31–33 (GGH), Asp-51, Phe-77, Asp-95, and Gln-102.

The protein belongs to the methyltransferase superfamily. RsmH family.

Its subcellular location is the cytoplasm. The enzyme catalyses cytidine(1402) in 16S rRNA + S-adenosyl-L-methionine = N(4)-methylcytidine(1402) in 16S rRNA + S-adenosyl-L-homocysteine + H(+). In terms of biological role, specifically methylates the N4 position of cytidine in position 1402 (C1402) of 16S rRNA. This Xylella fastidiosa (strain M23) protein is Ribosomal RNA small subunit methyltransferase H.